The following is an 82-amino-acid chain: Sec-independent protein translocase protein TatA (82 aa).

The helical transmembrane segment at 2–22 (GFGGISLWQLLIVLAIIVLLF) threads the bilayer. Residues 43-82 (KAMSDEKNTDKEKPEQIQKSEESAPLDSAHTEKNKDNNKV) form a disordered region. Composition is skewed to basic and acidic residues over residues 44–64 (AMSDEKNTDKEKPEQIQKSEE) and 71–82 (AHTEKNKDNNKV).

This sequence belongs to the TatA/E family. As to quaternary structure, the Tat system comprises two distinct complexes: a TatABC complex, containing multiple copies of TatA, TatB and TatC subunits, and a separate TatA complex, containing only TatA subunits. Substrates initially bind to the TatABC complex, which probably triggers association of the separate TatA complex to form the active translocon.

The protein resides in the cell inner membrane. Its function is as follows. Part of the twin-arginine translocation (Tat) system that transports large folded proteins containing a characteristic twin-arginine motif in their signal peptide across membranes. TatA could form the protein-conducting channel of the Tat system. This is Sec-independent protein translocase protein TatA from Pseudoalteromonas translucida (strain TAC 125).